The chain runs to 504 residues: D-alanine--D-alanyl carrier protein ligase (504 aa).

152-153 serves as a coordination point for ATP; the sequence is TS. Aspartate 197 is a binding site for D-alanine. 292–297 is a binding site for ATP; that stretch reads NTYGPT. Valine 301 contributes to the D-alanine binding site. ATP-binding positions include aspartate 383, 394-397, and lysine 492; that span reads YNGR. Lysine 492 provides a ligand contact to D-alanine.

The protein belongs to the ATP-dependent AMP-binding enzyme family. DltA subfamily.

The protein localises to the cytoplasm. The enzyme catalyses holo-[D-alanyl-carrier protein] + D-alanine + ATP = D-alanyl-[D-alanyl-carrier protein] + AMP + diphosphate. It participates in cell wall biogenesis; lipoteichoic acid biosynthesis. In terms of biological role, catalyzes the first step in the D-alanylation of lipoteichoic acid (LTA), the activation of D-alanine and its transfer onto the D-alanyl carrier protein (Dcp) DltC. In an ATP-dependent two-step reaction, forms a high energy D-alanyl-AMP intermediate, followed by transfer of the D-alanyl residue as a thiol ester to the phosphopantheinyl prosthetic group of the Dcp. D-alanylation of LTA plays an important role in modulating the properties of the cell wall in Gram-positive bacteria, influencing the net charge of the cell wall. In Bacillus thuringiensis (strain Al Hakam), this protein is D-alanine--D-alanyl carrier protein ligase.